We begin with the raw amino-acid sequence, 207 residues long: Superoxide dismutase [Fe] (207 aa).

Histidine 28, histidine 76, aspartate 160, and histidine 164 together coordinate Fe cation.

It belongs to the iron/manganese superoxide dismutase family. Homotetramer. The cofactor is Fe cation.

Its subcellular location is the secreted. It carries out the reaction 2 superoxide + 2 H(+) = H2O2 + O2. Destroys superoxide anion radicals which are normally produced within the cells and which are toxic to biological systems. The sequence is that of Superoxide dismutase [Fe] (sodB) from Mycobacterium tuberculosis (strain CDC 1551 / Oshkosh).